The following is an 87-amino-acid chain: Phosphoribosyl-ATP pyrophosphatase (87 aa).

It belongs to the PRA-PH family.

The protein localises to the cytoplasm. It carries out the reaction 1-(5-phospho-beta-D-ribosyl)-ATP + H2O = 1-(5-phospho-beta-D-ribosyl)-5'-AMP + diphosphate + H(+). The protein operates within amino-acid biosynthesis; L-histidine biosynthesis; L-histidine from 5-phospho-alpha-D-ribose 1-diphosphate: step 2/9. This chain is Phosphoribosyl-ATP pyrophosphatase, found in Salinibacter ruber (strain DSM 13855 / M31).